The following is a 71-amino-acid chain: Protein translocase subunit SecE (71 aa).

The helical transmembrane segment at 43 to 63 (VAGAGILAVGAIGFIIYVLLT) threads the bilayer.

The protein belongs to the SecE/SEC61-gamma family. As to quaternary structure, component of the Sec protein translocase complex. Heterotrimer consisting of SecY (alpha), SecG (beta) and SecE (gamma) subunits. The heterotrimers can form oligomers, although 1 heterotrimer is thought to be able to translocate proteins. Interacts with the ribosome. May interact with SecDF, and other proteins may be involved.

The protein resides in the cell membrane. Functionally, essential subunit of the Sec protein translocation channel SecYEG. Clamps together the 2 halves of SecY. May contact the channel plug during translocation. In Methanosarcina acetivorans (strain ATCC 35395 / DSM 2834 / JCM 12185 / C2A), this protein is Protein translocase subunit SecE.